A 270-amino-acid polypeptide reads, in one-letter code: NAD kinase (270 aa).

Asp-57 functions as the Proton acceptor in the catalytic mechanism. Residues 57–58 (DG), 125–126 (NE), Arg-150, and Asn-227 each bind NAD(+).

It belongs to the NAD kinase family. The cofactor is a divalent metal cation.

It is found in the cytoplasm. It catalyses the reaction NAD(+) + ATP = ADP + NADP(+) + H(+). Functionally, involved in the regulation of the intracellular balance of NAD and NADP, and is a key enzyme in the biosynthesis of NADP. Catalyzes specifically the phosphorylation on 2'-hydroxyl of the adenosine moiety of NAD to yield NADP. In Ureaplasma parvum serovar 3 (strain ATCC 700970), this protein is NAD kinase.